Reading from the N-terminus, the 120-residue chain is MAMENDELKNLFTSALRRIIGKGISKKYKTLIEKAQKKRDTAPYGEKPDAVKTHLRDMIILPSMIGCVIGVYQGKDYVSVEIKPEMVGMKLSDFSLTYRPVKHGKPSIGATSSSGFVPLK.

The protein belongs to the universal ribosomal protein uS19 family.

The protein is Small ribosomal subunit protein uS19 (RPS15) of Naegleria gruberi (Amoeba).